The chain runs to 492 residues: MEPSSKKLTGRLMLAVGGAVLGSLQFGYNTGVINAPQKVIEEFYNQTWLHRYGESISPATLTTLWSLSVAIFSVGGMIGSFSVGLFVNRFGRRNSMLMMNLLAFISAVLMGFSKLGKSFEMLILGRFIIGVYCGLTTGFVPMYVGEVSPTALRGALGTLHQLGIVVGILIAQVFGLDSIMGNEELWPLLLSVIFIPALLQCVLLPFCPESPRFLLINRNEENRAKSVLKKLRGTADVTRDLQEMKEESRQMMREKKVTILELFRSAAYRQPILIAVVLQLSQQLSGINAVFYYSTSIFEKAGVQQPVYATIGSGIVNTAFTVVSLFVVERAGRRTLHLIGLAGMAGCAVLMTIALALLEQLPWMSYLSIVAIFGFVAFFEVGPGPIPWFIVAELFSQGPRPAAIAVAGFSNWTSNFIVGMCFQYVEQLCGPYVFIIFTVLLVLFFIFTYFKVPETKGRTFDEIASGFRQGGASQSDKTPEELFHPLGADSQV.

Met1 bears the N-acetylmethionine mark. Topologically, residues Met1–Arg11 are cytoplasmic. The chain crosses the membrane as a helical span at residues Leu12–Ile33. Residues Asn34–Ser66 lie on the Extracellular side of the membrane. Asn45 is a glycosylation site (N-linked (GlcNAc...) asparagine). A helical transmembrane segment spans residues Leu67–Val87. Over Asn88 to Phe90 the chain is Cytoplasmic. Residues Gly91–Phe112 traverse the membrane as a helical segment. The Extracellular portion of the chain corresponds to Ser113 to Glu120. Residues Met121–Val144 traverse the membrane as a helical segment. At Gly145–Ala155 the chain is on the cytoplasmic side. The chain crosses the membrane as a helical span at residues Leu156–Leu176. A D-glucose-binding site is contributed by Gln161. The Extracellular portion of the chain corresponds to Asp177–Leu185. The chain crosses the membrane as a helical span at residues Trp186 to Phe206. Topologically, residues Cys207 to Pro271 are cytoplasmic. Ser226 carries the phosphoserine modification. The chain crosses the membrane as a helical span at residues Ile272–Tyr293. D-glucose contacts are provided by residues Gln282–Gln283 and Asn288. Residues Ser294–Pro306 lie on the Extracellular side of the membrane. A helical membrane pass occupies residues Val307–Val328. Asn317 contributes to the D-glucose binding site. At Glu329–Arg334 the chain is on the cytoplasmic side. A helical transmembrane segment spans residues Thr335–Leu355. Over Ala356–Ser365 the chain is Extracellular. A helical transmembrane segment spans residues Tyr366 to Trp388. Residues Glu380 and Trp388 each coordinate D-glucose. Topologically, residues Phe389–Pro401 are cytoplasmic. A helical transmembrane segment spans residues Ala402–Phe422. The Extracellular segment spans residues Gln423–Cys429. A helical transmembrane segment spans residues Gly430–Phe450. Ser465 is modified (phosphoserine). A disordered region spans residues Arg468–Val492. The residue at position 478 (Thr478) is a Phosphothreonine. Ser490 bears the Phosphoserine mark.

The protein belongs to the major facilitator superfamily. Sugar transporter (TC 2.A.1.1) family. Glucose transporter subfamily. In terms of assembly, found in a complex with ADD2, DMTN and SLC2A1. Interacts (via C-terminus cytoplasmic region) with DMTN. Interacts with SNX27; the interaction is required when endocytosed to prevent degradation in lysosomes and promote recycling to the plasma membrane. Interacts with GIPC (via PDZ domain). Interacts with STOM. Interacts with SGTA (via Gln-rich region). Interacts with BSG. Interacts with SMIM43; the interaction may promote SLC2A1-mediated glucose transport to meet the energy needs of mesendoderm differentiation. In terms of processing, phosphorylation at Ser-226 by PKC promotes glucose uptake by increasing cell membrane localization.

It localises to the cell membrane. It is found in the photoreceptor inner segment. The enzyme catalyses D-glucose(out) = D-glucose(in). With respect to regulation, the uptake of glucose is inhibited by cytochalasin B. Glucose uptake is increased in response to phorbol ester 12-O-tetradecanoylphorbol-13-acetate (TPA) treatment: TPA-induced glucose uptake requires phosphorylation at Ser-226. In terms of biological role, facilitative glucose transporter, which is responsible for constitutive or basal glucose uptake. Has a very broad substrate specificity; can transport a wide range of aldoses including both pentoses and hexoses. Most important energy carrier of the brain: present at the blood-brain barrier and assures the energy-independent, facilitative transport of glucose into the brain. In association with BSG and NXNL1, promotes retinal cone survival by increasing glucose uptake into photoreceptors. Required for mesendoderm differentiation. The protein is Solute carrier family 2, facilitated glucose transporter member 1 of Sus scrofa (Pig).